Here is a 95-residue protein sequence, read N- to C-terminus: Cobalt transport protein CbiN (95 aa).

Transmembrane regions (helical) follow at residues 5–25 (HIIL…IYAG) and 67–87 (LLFA…IGYY).

It belongs to the CbiN family. Forms an energy-coupling factor (ECF) transporter complex composed of an ATP-binding protein (A component, CbiO), a transmembrane protein (T component, CbiQ) and 2 possible substrate-capture proteins (S components, CbiM and CbiN) of unknown stoichimetry.

The protein resides in the cell membrane. The protein operates within cofactor biosynthesis; adenosylcobalamin biosynthesis. Its function is as follows. Part of the energy-coupling factor (ECF) transporter complex CbiMNOQ involved in cobalt import. This Methanocaldococcus jannaschii (strain ATCC 43067 / DSM 2661 / JAL-1 / JCM 10045 / NBRC 100440) (Methanococcus jannaschii) protein is Cobalt transport protein CbiN.